Here is a 435-residue protein sequence, read N- to C-terminus: Serine--tRNA ligase (435 aa).

242 to 244 is an L-serine binding site; the sequence is TAE. 273 to 275 serves as a coordination point for ATP; the sequence is RSE. Glu296 is a binding site for L-serine. 360–363 is an ATP binding site; sequence EISS. Ser396 is an L-serine binding site.

This sequence belongs to the class-II aminoacyl-tRNA synthetase family. Type-1 seryl-tRNA synthetase subfamily. As to quaternary structure, homodimer. The tRNA molecule binds across the dimer.

The protein resides in the cytoplasm. The enzyme catalyses tRNA(Ser) + L-serine + ATP = L-seryl-tRNA(Ser) + AMP + diphosphate + H(+). The catalysed reaction is tRNA(Sec) + L-serine + ATP = L-seryl-tRNA(Sec) + AMP + diphosphate + H(+). The protein operates within aminoacyl-tRNA biosynthesis; selenocysteinyl-tRNA(Sec) biosynthesis; L-seryl-tRNA(Sec) from L-serine and tRNA(Sec): step 1/1. In terms of biological role, catalyzes the attachment of serine to tRNA(Ser). Is also able to aminoacylate tRNA(Sec) with serine, to form the misacylated tRNA L-seryl-tRNA(Sec), which will be further converted into selenocysteinyl-tRNA(Sec). This chain is Serine--tRNA ligase, found in Vibrio vulnificus (strain CMCP6).